The following is a 63-amino-acid chain: Bowman-birk type proteinase inhibitor (63 aa).

Disulfide bonds link Cys-7–Cys-61, Cys-8–Cys-23, Cys-11–Cys-57, Cys-13–Cys-21, Cys-31–Cys-38, Cys-35–Cys-50, and Cys-40–Cys-48.

Its function is as follows. Inhibits trypsin, chymotrypsin, plasmin and factor XIIa. Does not inhibit factor Xa, thrombin and plasma kallikrein. This chain is Bowman-birk type proteinase inhibitor, found in Amburana acreana (Cerejeira).